Reading from the N-terminus, the 273-residue chain is Phosphate import ATP-binding protein PstB (273 aa).

An ABC transporter domain is found at 26 to 268 (MRGEKVCVFY…PTEKRTQDYI (243 aa)). An ATP-binding site is contributed by 58 to 65 (GPSGCGKS).

Belongs to the ABC transporter superfamily. Phosphate importer (TC 3.A.1.7) family. The complex is composed of two ATP-binding proteins (PstB), two transmembrane proteins (PstC and PstA) and a solute-binding protein (PstS).

The protein resides in the cell inner membrane. The catalysed reaction is phosphate(out) + ATP + H2O = ADP + 2 phosphate(in) + H(+). Its function is as follows. Part of the ABC transporter complex PstSACB involved in phosphate import. Responsible for energy coupling to the transport system. The chain is Phosphate import ATP-binding protein PstB from Brucella abortus (strain 2308).